The sequence spans 216 residues: Protein fmp32, mitochondrial (216 aa).

The stretch at 111–133 forms a coiled coil; it reads RQEMVALHSQVEQLFSDVERLKT. Residues 193–215 traverse the membrane as a helical segment; that stretch reads TLQWVFGIVTGSGALLLAYVRLI.

The protein belongs to the CCDC90 family.

The protein resides in the mitochondrion. It localises to the membrane. The chain is Protein fmp32, mitochondrial (fmp32) from Schizosaccharomyces pombe (strain 972 / ATCC 24843) (Fission yeast).